Here is a 66-residue protein sequence, read N- to C-terminus: Movement protein TGBp3 (66 aa).

At 1 to 2 (MD) the chain is on the lumenal side. The chain crosses the membrane as a helical span at residues 3–23 (FTTLVIIGVYLLVFIVYFAKI). The Cytoplasmic segment spans residues 24-66 (NTSMCTISISGASVEISGCDNPALFEILPNLKPFDHGLSVPSI).

It belongs to the Tymovirales TGBp3 protein family.

The protein resides in the host endoplasmic reticulum membrane. Its function is as follows. Plays a role in viral cell-to-cell propagation, by facilitating genome transport to neighboring plant cells through plasmosdesmata. May induce the formation of granular vesicles derived from the Endoplasmic reticulum, which align on actin filaments. The protein is Movement protein TGBp3 of Trifolium (WCMV).